A 187-amino-acid chain; its full sequence is uncharacterized protein (187 aa).

4 helical membrane passes run 29-50, 70-92, 128-147, and 154-176; these read IFIDIFIGVWAFILAVVWVYWI, FVIGYFLTFVIVAWLTSAAINAY, IFFALTFFSIGVISDFSVLR, and LALVYFVCLFGFIIWIGLAISYL.

Its subcellular location is the cell membrane. This is an uncharacterized protein from Archaeoglobus fulgidus (strain ATCC 49558 / DSM 4304 / JCM 9628 / NBRC 100126 / VC-16).